The sequence spans 673 residues: MSLHAVSESNIKQIPDMDYYFISGGLPSNYGGLTKSLLLRSKLFGEECNQNTFFLTFRFDLELSSKIDELYSNGKIDKKFTSVINLFDDFLSVRTNGKRSYEERIGLDQIKKQVGMGKFAKTLLRLFGKKNNEMSVVYYGDGETIRYVDYWNDKNQLIKREEYTKNGNLVLVTHYDVQLNKMYLQEYINDQNQVYLDKLYVWNNEEKDVQLSHIIWYSLEGEIKVKDESELRQYWIEYLQKQNDKPKLFLVDSRPQDKHVFKVKKSPSSYYGAIIHNKHYGSNKYQIKGRYKEVFSQMYNLDAVFFITEEQLEDFKLISGEQETFFFTPHTIDKPLDPAVLNVPSEKYKAVIISRLASMKNLIHAVKAFSLVVKEIPEAKLDIFGSGEDFEKIKKEIEDTKLQNNVFLKGYTDNPDSEFQKAWLTISTSHFEGFGLSNMEALSNGCPVVTYDYDYGARSLVTDGANGYVIEQYNIEKLGQAIISLMKDESTHQKFSEQAFKMAEKYSRPNYIENWAFALNQMIEVRIEREKFSKKVGKKDPSISSYTEDFDKTKIEIDIENFDHNDIKKIRLVGLDRKNKAEIISTNLQNDQLFVIDLEKDVNIEKIAANKTQVIDFYIVFNANGHIKTMRRLSSEETKLSGNSIDTNNGYRVEPYTTVKGNFSWRVTEIKES.

Ser2 carries the post-translational modification Phosphoserine.

This sequence belongs to the glycosyltransferase group 1 family. Glycosyltransferase 4 subfamily.

It localises to the cytoplasm. It catalyses the reaction 4-O-{[(2R)-1-glycerylphospho](n)-(2R)-1-glycerylphospho}-N-acetyl-beta-D-mannosaminyl-(1-&gt;4)-N-acetyl-alpha-D-glucosaminyl undecaprenyl diphosphate + n UDP-alpha-D-glucose = 4-O-{[(2R)-2-alpha-D-glucosyl-1-glycerylphospho](n)-(2R)-1-glycerylphospho}-N-acetyl-beta-D-mannosaminyl-(1-&gt;4)-N-acetyl-alpha-D-glucosaminyl undecaprenyl diphosphate + n UDP + n H(+). It functions in the pathway cell wall biogenesis; poly(glycerol phosphate) teichoic acid biosynthesis. Functionally, catalyzes the addition of glucose to the C-2 hydroxy group of the glycerol units in teichoic acid. This chain is Poly(glycerol-phosphate) alpha-glucosyltransferase (tagE), found in Bacillus subtilis (strain 168).